Consider the following 265-residue polypeptide: Indole-3-glycerol phosphate synthase (265 aa).

The protein belongs to the TrpC family.

It catalyses the reaction 1-(2-carboxyphenylamino)-1-deoxy-D-ribulose 5-phosphate + H(+) = (1S,2R)-1-C-(indol-3-yl)glycerol 3-phosphate + CO2 + H2O. Its pathway is amino-acid biosynthesis; L-tryptophan biosynthesis; L-tryptophan from chorismate: step 4/5. This is Indole-3-glycerol phosphate synthase from Xanthomonas axonopodis pv. citri (strain 306).